The following is a 283-amino-acid chain: MRIIDSVADMQAFSRDARRSGKTIALVPTMGYLHDGHASLMREGRTRADILVVSIFVNPTQFGPNEDFTTYPRDLERDLQVAEAAGADVIFAPRADDMYPAGFQTYVDVEKVTLPLCGASRPGHFRGVTTVVAKLFNIVMPHTAFFGKKDFQQLAVIRRMVADLNMDLSIVGMPIIREPDGLAMSSRNAYLGPQERTNALCLNRSLAAARTLFTDGERSVARLRDTVLRILTEVPGAAIDYADFRDSETLEPVEAANEKTLLALAVKIGTTRLIDNCVLGEEQ.

ATP is bound at residue 30 to 37; sequence MGYLHDGH. His37 acts as the Proton donor in catalysis. Gln61 lines the (R)-pantoate pocket. Gln61 contacts beta-alanine. 147–150 is an ATP binding site; sequence GKKD. Gln153 is a binding site for (R)-pantoate. ATP is bound by residues Ile176 and 184-187; that span reads MSSR.

Belongs to the pantothenate synthetase family. As to quaternary structure, homodimer.

It localises to the cytoplasm. The enzyme catalyses (R)-pantoate + beta-alanine + ATP = (R)-pantothenate + AMP + diphosphate + H(+). Its pathway is cofactor biosynthesis; (R)-pantothenate biosynthesis; (R)-pantothenate from (R)-pantoate and beta-alanine: step 1/1. Catalyzes the condensation of pantoate with beta-alanine in an ATP-dependent reaction via a pantoyl-adenylate intermediate. The polypeptide is Pantothenate synthetase (Geobacter sulfurreducens (strain ATCC 51573 / DSM 12127 / PCA)).